Here is a 187-residue protein sequence, read N- to C-terminus: Urease accessory protein UreE (187 aa).

Residues 154 to 187 (RANSAQGHGHSHGHSHSHDHHGYHHHGDGNWHKH) form a disordered region. The segment covering 162–177 (GHSHGHSHSHDHHGYH) has biased composition (basic residues). Over residues 178-187 (HHGDGNWHKH) the composition is skewed to basic and acidic residues.

Belongs to the UreE family.

It is found in the cytoplasm. Functionally, involved in urease metallocenter assembly. Binds nickel. Probably functions as a nickel donor during metallocenter assembly. The sequence is that of Urease accessory protein UreE from Actinobacillus pleuropneumoniae (Haemophilus pleuropneumoniae).